A 622-amino-acid chain; its full sequence is Condensin-2 complex subunit H2 (622 aa).

Phosphothreonine is present on Thr-19. Residues Ser-95, Ser-199, Ser-223, and Ser-227 each carry the phosphoserine modification. The disordered stretch occupies residues 207–354 (WNPKEPGRAE…PGQKRKRKGA (148 aa)). Residues 262–273 (AAEPPEASAPEV) are compositionally biased toward low complexity. Ser-282 is subject to Phosphoserine. The segment covering 294 to 312 (TLRERKEAPEPASRLKDTP) has biased composition (basic and acidic residues).

The protein belongs to the CND2 H2 (condensin-2 subunit 2) family. In terms of assembly, component of the condensin-2 complex, which contains the SMC2 and SMC4 heterodimer, and three non SMC subunits, NCAPG2, NCAPH2 and NCAPD3 that probably regulate the complex.

It is found in the nucleus. Functionally, regulatory subunit of the condensin-2 complex, a complex that seems to provide chromosomes with an additional level of organization and rigidity and in establishing mitotic chromosome architecture. May promote the resolution of double-strand DNA catenanes (intertwines) between sister chromatids. Condensin-mediated compaction likely increases tension in catenated sister chromatids, providing directionality for type II topoisomerase-mediated strand exchanges toward chromatid decatenation. Required for decatenation of chromatin bridges at anaphase. Early in neurogenesis, may play an essential role to ensure accurate mitotic chromosome condensation in neuron stem cells, ultimately affecting neuron pool and cortex size. Seems to have lineage-specific role in T-cell development. This is Condensin-2 complex subunit H2 (NCAPH2) from Bos taurus (Bovine).